A 221-amino-acid polypeptide reads, in one-letter code: Ras-related protein Rab-28 (221 aa).

Ser-2 bears the N-acetylserine mark. Ser-8 carries the phosphoserine modification. Gly-21, Gly-24, Lys-25, Thr-26, Ser-27, Gly-38, Lys-39, Tyr-41, and Thr-44 together coordinate GTP. Thr-26 serves as a coordination point for Mg(2+). Positions Glu-35–Phe-49 are switch I. Mg(2+)-binding residues include Thr-44 and Asp-68. The switch II stretch occupies residues Asp-68 to Gly-85. Residues Gly-71, Asn-129, Lys-130, Asp-132, Ala-160, and Lys-161 each coordinate GTP. The residue at position 218 (Cys-218) is a Cysteine methyl ester. The S-farnesyl cysteine moiety is linked to residue Cys-218. A propeptide spans Ala-219–Gln-221 (removed in mature form).

Belongs to the small GTPase superfamily. Rab family. In terms of assembly, interacts (prenylated form) with PDE6D; the interaction promotes RAB28 delivery to the photoreceptor outer segments. Interacts with KCNJ13; the interaction may facilitate cone outer segments phagocytosis. Also participates in nuclear factor kappa-B p65/RELA nuclear transport in endothelial cells. The cofactor is Mg(2+). Isoprenylated.

The protein localises to the cell membrane. The protein resides in the cytoplasm. It localises to the cytoskeleton. It is found in the cilium basal body. Its subcellular location is the nucleus. It catalyses the reaction GTP + H2O = GDP + phosphate + H(+). Regulated by guanine nucleotide exchange factors (GEFs) which promote the exchange of bound GDP for free GTP. Regulated by GTPase activating proteins (GAPs) which increase the GTP hydrolysis activity. Inhibited by GDP dissociation inhibitors (GDIs). The small GTPases Rab are key regulators of intracellular membrane trafficking, from the formation of transport vesicles to their fusion with membranes. Rabs cycle between an inactive GDP-bound form and an active GTP-bound form that is able to recruit to membranes different sets of downstream effectors directly responsible for vesicle formation, movement, tethering and fusion. RAB28 is required for shedding and phagocytosis of cone cell outer segments (OS) discs in the retina. Also participates in nuclear factor kappa-B p65/RELA nuclear transport in endothelial cells. The chain is Ras-related protein Rab-28 (RAB28) from Pongo abelii (Sumatran orangutan).